Consider the following 228-residue polypeptide: MHEFLKAFKDAFPHTISILLGYLLMGMTFGMLLVQQGYDYKVALFMSLFIYAGAVQFVAITLLSAQASLMNVVIVSLLVNARQTCYALSMLDRFKNTKWRLPYLAHALTDETFALLNLYAPKEGVSEKDFIFSISLLNHSYWIFGSLVGSLVGSHFSFDTQGMEFVMTAIFIVLFMEQYKRTTNHKNAWLGIVIAVVCLALFGTEYFLLIALVLMVLALMLFRKQLEC.

5 consecutive transmembrane segments (helical) span residues 14-34, 42-62, 130-150, 156-176, and 192-212; these read HTIS…MLLV, VALF…AITL, FIFS…LVGS, FSFD…VLFM, and IVIA…LIAL.

It belongs to the AzlC family.

Its subcellular location is the cell membrane. This is an uncharacterized protein from Helicobacter pylori (strain ATCC 700392 / 26695) (Campylobacter pylori).